A 575-amino-acid chain; its full sequence is Arginine--tRNA ligase (575 aa).

Residues 136 to 146 carry the 'HIGH' region motif; sequence ANPTGPLHVGH.

The protein belongs to the class-I aminoacyl-tRNA synthetase family. Monomer.

The protein resides in the cytoplasm. It catalyses the reaction tRNA(Arg) + L-arginine + ATP = L-arginyl-tRNA(Arg) + AMP + diphosphate. This Polynucleobacter necessarius subsp. necessarius (strain STIR1) protein is Arginine--tRNA ligase.